The following is a 287-amino-acid chain: MRIILITGISGSGKSVGLTSLEDAGYFCVDNLPPTLLRALVATRQEEHADKLAVAMDARSASSLIGLPADIAWLQSQGHEVKVLFLTAKTDSLIARFSETRRSHPLSHRGFSSTAAEDRRTLTECIREEREMLSGVEEISHVIDTSGMSANKLRGWIKALIESDHSPLTVLFESFAFKFGVPLDADLVFDVRMLPNPHYDSQLRPLTGRDAPVQAFLQDQPDATALLADIRGFVEKWLPAFKKDNRSYLTVAIGCTGGQHRSVYMVEQLAAHFRAHEHVILRHRELD.

Residue 8–15 (GISGSGKS) coordinates ATP. Residue 57–60 (DARS) coordinates GTP.

It belongs to the RapZ-like family.

Functionally, displays ATPase and GTPase activities. The sequence is that of Nucleotide-binding protein mma_3120 from Janthinobacterium sp. (strain Marseille) (Minibacterium massiliensis).